Consider the following 635-residue polypeptide: Threonine--tRNA ligase (635 aa).

The 58-residue stretch at 1-58 (MIRVICNNETVELPKGATAADFASKIKNSHYFAGVVINDQIKDLSTTLNEGDTLRFVT) folds into the TGS domain. A catalytic region spans residues 237 to 528 (DHRVLGAKLD…LIEHFKGKFP (292 aa)). Zn(2+) contacts are provided by cysteine 328, histidine 379, and histidine 505.

This sequence belongs to the class-II aminoacyl-tRNA synthetase family. Homodimer. The cofactor is Zn(2+).

It localises to the cytoplasm. It catalyses the reaction tRNA(Thr) + L-threonine + ATP = L-threonyl-tRNA(Thr) + AMP + diphosphate + H(+). Functionally, catalyzes the attachment of threonine to tRNA(Thr) in a two-step reaction: L-threonine is first activated by ATP to form Thr-AMP and then transferred to the acceptor end of tRNA(Thr). Also edits incorrectly charged L-seryl-tRNA(Thr). The polypeptide is Threonine--tRNA ligase (Chlamydia caviae (strain ATCC VR-813 / DSM 19441 / 03DC25 / GPIC) (Chlamydophila caviae)).